The sequence spans 605 residues: Probable potassium transport system protein Kup 1 (605 aa).

Transmembrane regions (helical) follow at residues 16–36, 46–66, 97–117, 138–158, 166–186, 212–232, 248–268, 287–307, 339–359, 368–388, 397–417, and 418–438; these read ALGLVFGDIGTSPIYTLTVIF, VFGILSLVFWTMTILVTMEYA, VAFAGFLSFVGVSLLLGDGVI, GLSTGTLVAIAAAIAIGLFSV, VAGAFGPIMAVWFSTLAVTGV, GLAGYFVLSEVILCSTGGEAL, WYFVFMALYLNYLGQGVFAIT, LYIPFLILTIMATIIASQSII, IYLGAVNWSLMVAVILVMLLF, AYGMAVTGSMTITGIMMIIVF, ALVALVITLIDAAYLLSTFSK, and IPHGAYWSLILASIPFVTIII.

This sequence belongs to the HAK/KUP transporter (TC 2.A.72) family.

It is found in the cell inner membrane. It carries out the reaction K(+)(in) + H(+)(in) = K(+)(out) + H(+)(out). Transport of potassium into the cell. Likely operates as a K(+):H(+) symporter. The chain is Probable potassium transport system protein Kup 1 from Geobacter metallireducens (strain ATCC 53774 / DSM 7210 / GS-15).